The primary structure comprises 116 residues: Alpha-defensin 29 (116 aa).

The first 19 residues, 1–19 (MKTLVLLSALVLPCFQVQA), serve as a signal peptide directing secretion. Positions 20–60 (DPIQNTDEETKTEEQPEEEDQAVSVSFGGTEGSALQDVAQR) are excised as a propeptide. Residues 22-44 (IQNTDEETKTEEQPEEEDQAVSV) are disordered. A run of 9 repeats spans residues 65 to 67 (CRK), 68 to 70 (CRV), 71 to 73 (CQK), 74 to 76 (CQV), 77 to 79 (CQK), 80 to 82 (CPV), 83 to 85 (CPT), 86 to 88 (CPQ), and 89 to 91 (CPK). The interval 65–70 (CRKCRV) is 2 X 3 AA tandem repeats of C-R-X. The 3 X 3 AA tandem repeats of C-Q-X stretch occupies residues 71 to 79 (CQKCQVCQK). The 4 X 3 AA tandem repeats of C-P-X stretch occupies residues 80–91 (CPVCPTCPQCPK).

It belongs to the alpha-defensin family. Small bowel.

The protein localises to the secreted. In terms of biological role, apparent precursor of a secreted, cationic, proline- and cysteine-rich peptide that contains Cys-Pro-Xaa repeats. Unlike cryptdin, the proposed mature peptide region lacks the structural motif characteristic of defensins. The chain is Alpha-defensin 29 from Mus musculus (Mouse).